We begin with the raw amino-acid sequence, 138 residues long: Basic phospholipase A2 ammodytoxin C (138 aa).

Residues 1-16 form the signal peptide; that stretch reads MRTLWIVAVCLIGVEG. Cystine bridges form between Cys-42/Cys-131, Cys-44/Cys-60, Cys-59/Cys-111, Cys-65/Cys-138, Cys-66/Cys-104, Cys-73/Cys-97, and Cys-91/Cys-102. Ca(2+)-binding residues include Tyr-43, Gly-45, and Gly-47. Residue His-63 is part of the active site. Asp-64 lines the Ca(2+) pocket. The active site involves Asp-105.

The protein belongs to the phospholipase A2 family. Group II subfamily. D49 sub-subfamily. As to quaternary structure, monomer. Binds to calmodulin, coagulation factor X (F10), 14-3-3 proteins gamma (YWHAG) and epsilon (YWHAE), and R25, a mitochondrial membrane protein. May bind to M-type PLA2 receptor (R-180). It depends on Ca(2+) as a cofactor. Expressed by the venom gland.

It is found in the secreted. Its subcellular location is the host cytoplasm. The protein resides in the host cytosol. It carries out the reaction a 1,2-diacyl-sn-glycero-3-phosphocholine + H2O = a 1-acyl-sn-glycero-3-phosphocholine + a fatty acid + H(+). Functionally, snake venom phospholipase A2 (PLA2) that acts as a presynaptic neurotoxin, an inhibitor of blood coagulation, and has been found to bind with high affinity to intracellular proteins. The response of indirectly stimulated neuromuscular preparations to ammodytoxin (Atx) is triphasic. The first phase, the transient inhibition of the acetylcholine (ACh) release, starts soon after the addition of Atx and lasts for several minutes. This phase is probably independent of Atx enzymatic activity. The effect may be due to the specific binding of the toxin to presynaptic receptors. These receptors, called N-type receptors, are still unidentified. It is noteworthy that a neuronal isoform of the M-type PLA2 receptor (R180) has been identified as a high-affinity receptor for Atx in neuronal plasma membranes. It was demonstrated however that this receptor is not essential for expression of neurotoxicity by Atx. The second phase corresponds to an augmentation of neurotransmitter release. A peak is reached 10-20 minutes after exposure of the preparation to Atx and is followed by a gradual reduction. In this phase, the enzymatic activity of Atx of the mammalian is not significant. It is speculated that the increased release of neurotransmitter in this phase is induced by the interference of Atx with voltage-gated potassium channels. Measurements of ionic showed however that voltage-gated potassium channels are not affected by Atx. The third phase of the response of neuromuscular preparations to Atx, which corresponds to a complete and irreversible paralysis, is clearly dependent on the hydrolytic activity of the toxin. In addition to its presynaptic neurotoxicity, Atx shows an anticoagulant activity by binding with high affinity to activated coagulation factor X (F10) thus inhibiting the formation of the prothrombinase complex (FX/FV) and its activity (IC(50) is 240 nM). Surprisingly, Atx was discovered to bind intracellular proteins such as calmodulin (CaM), 14-3-3 proteins gamma (YWHAG) and epsilon (YWHAE), as well as R25, a mitochondrial integral membrane protein found in cerebral cortex. These findings raised a doubt about the dogma of the exclusively extracellular action of PLA2s, defended by the potential instability of these molecules in the reducing environment of the eukaryotic cytosol coupled with their possible inability to act as enzymes in this cellular compartment, due to too low concentration of calcium ions. This hypothesis was challenged efficiently by demonstrating the internalization of AtxA into a culture cells, but still remains to be directly demonstrated in vivo. PLA2 catalyzes the calcium-dependent hydrolysis of the 2-acyl groups in 3-sn-phosphoglycerides. The sequence is that of Basic phospholipase A2 ammodytoxin C from Vipera ammodytes ammodytes (Western sand viper).